A 274-amino-acid chain; its full sequence is CDC48-associated ubiquitin-like/zinc finger protein 1 (274 aa).

Residues 12–58 (LDVGKHCAYCRQLDFLPFHCSFCNEDFCSNHRLKEDHHCRWLLEHEE) form an AN1-type zinc finger. Zn(2+) is bound by residues Cys-18, Cys-21, Cys-31, Cys-34, Cys-39, His-42, His-48, and Cys-50. The tract at residues 170–266 (NRIYIWCYLV…KDLDTLYLVH (97 aa)) is ubiquitin-like. Residue Ser-273 is modified to Phosphoserine.

Interacts (via its ubiquitin-like domain) with CDC48 (via N-terminus). Associates with the 26S proteasome. Specifically interacts with the regulatory particle (RP) subunit RPN2. Exposure to arsenite, a known inducer of protein misfolding resulting in accumulation of polyubiquitinated conjugates, enhances the association with the proteoasome. Binds to ubiquitinated proteins conjugated to a 4 or more molecule ubiquitin chain. Binding to ubiquitinated proteins is zinc-dependent.

The protein localises to the cytoplasm. The protein resides in the nucleus. Its function is as follows. Promotes efficient arsenite-induced clearance of stress granules (SGs). May have a role in the ubiquitin-proteasome system (UPS) protecting cells from metalloid-induced proteotoxicity. The chain is CDC48-associated ubiquitin-like/zinc finger protein 1 from Saccharomyces cerevisiae (strain ATCC 204508 / S288c) (Baker's yeast).